The sequence spans 223 residues: Deoxyribose-phosphate aldolase (223 aa).

The active-site Proton donor/acceptor is the aspartate 89. Lysine 152 functions as the Schiff-base intermediate with acetaldehyde in the catalytic mechanism. Catalysis depends on lysine 181, which acts as the Proton donor/acceptor.

Belongs to the DeoC/FbaB aldolase family. DeoC type 1 subfamily.

Its subcellular location is the cytoplasm. The enzyme catalyses 2-deoxy-D-ribose 5-phosphate = D-glyceraldehyde 3-phosphate + acetaldehyde. It participates in carbohydrate degradation; 2-deoxy-D-ribose 1-phosphate degradation; D-glyceraldehyde 3-phosphate and acetaldehyde from 2-deoxy-alpha-D-ribose 1-phosphate: step 2/2. In terms of biological role, catalyzes a reversible aldol reaction between acetaldehyde and D-glyceraldehyde 3-phosphate to generate 2-deoxy-D-ribose 5-phosphate. The sequence is that of Deoxyribose-phosphate aldolase from Listeria monocytogenes serotype 4b (strain CLIP80459).